An 89-amino-acid chain; its full sequence is Small ribosomal subunit protein uS14 (89 aa).

The protein belongs to the universal ribosomal protein uS14 family. In terms of assembly, part of the 30S ribosomal subunit. Contacts proteins S3 and S10.

Its function is as follows. Binds 16S rRNA, required for the assembly of 30S particles and may also be responsible for determining the conformation of the 16S rRNA at the A site. The sequence is that of Small ribosomal subunit protein uS14 from Chloroherpeton thalassium (strain ATCC 35110 / GB-78).